Reading from the N-terminus, the 132-residue chain is Large ribosomal subunit protein bL17 (132 aa).

It belongs to the bacterial ribosomal protein bL17 family. In terms of assembly, part of the 50S ribosomal subunit. Contacts protein L32.

This Ralstonia pickettii (strain 12J) protein is Large ribosomal subunit protein bL17.